We begin with the raw amino-acid sequence, 243 residues long: Venom nerve growth factor 5 (243 aa).

The first 18 residues, 1–18 (MSMLCYTLIIAFLIGIWA), serve as a signal peptide directing secretion. A propeptide spanning residues 19 to 125 (APKSEDNVPL…TLNRNIRTKR (107 aa)) is cleaved from the precursor. The segment covering 47–66 (GLKTSRNTDQRHPAPKKAED) has biased composition (basic and acidic residues). The tract at residues 47–67 (GLKTSRNTDQRHPAPKKAEDQ) is disordered. 3 cysteine pairs are disulfide-bonded: C139/C204, C182/C232, and C192/C234. N148 carries N-linked (GlcNAc...) asparagine glycosylation.

Belongs to the NGF-beta family. As to quaternary structure, homodimer; non-covalently linked. As to expression, expressed by the venom gland.

The protein resides in the secreted. Nerve growth factor is important for the development and maintenance of the sympathetic and sensory nervous systems. It stimulates division and differentiation of sympathetic and embryonic sensory neurons as well as basal forebrain cholinergic neurons in the brain. Its relevance in the snake venom is not clear. However, it has been shown to inhibit metalloproteinase-dependent proteolysis of platelet glycoprotein Ib alpha, suggesting a metalloproteinase inhibition to prevent metalloprotease autodigestion and/or protection against prey proteases. Binds a lipid between the two protein chains in the homodimer. The lipid-bound form promotes histamine relase from mouse mast cells, contrary to the lipid-free form. The polypeptide is Venom nerve growth factor 5 (Tropidechis carinatus (Australian rough-scaled snake)).